Reading from the N-terminus, the 574-residue chain is Galectin-3-binding protein (574 aa).

An N-terminal signal peptide occupies residues 1-18 (MALLWLLSVFLLVPGTQG). Residues 24-124 (MRLVNGASAS…HEKDAGVVCS (101 aa)) enclose the SRCR domain. 3 cysteine pairs are disulfide-bonded: Cys49-Cys113, Cys62-Cys123, and Cys93-Cys103. N-linked (GlcNAc...) asparagine glycans are attached at residues Asn69, Asn96, Asn102, and Asn125. The BTB domain maps to 153-221 (CDLFIQVTGQ…FYSRRIEVSM (69 aa)). The 101-residue stretch at 260–360 (PLELYEYAQA…MLPQELFELQ (101 aa)) folds into the BACK domain. Residues Asn362, Asn398, Asn540, and Asn569 are each glycosylated (N-linked (GlcNAc...) asparagine).

Homodimers and homomultimers. The multimers form ring-like structures with a diameter of 30-40 nm. Binds LGALS1 and LGALS3. Binds ITGB1, COL4A1, COL5A1, COL6A1, FN1 and NID. The unglycosylated form interacts with PDE4DIP; this interaction, which is PDE4DIP isoform-specific, may connect a pericentrosomal complex to the gamma-tubulin ring complex (gamma-TuRC) to promote microtubule assembly and acetylation. Detected in thyroid (at protein level).

The protein resides in the secreted. It localises to the extracellular space. The protein localises to the extracellular matrix. Functionally, promotes integrin-mediated cell adhesion. May stimulate host defense against viruses and tumor cells. This chain is Galectin-3-binding protein (Lgals3bp), found in Rattus norvegicus (Rat).